We begin with the raw amino-acid sequence, 103 residues long: MANQKIRIRLKAYDYALIDRSAQEIVETAKRTGAVVKGPIPLPTKIERFNILRSPHVNKTSREQLEIRTHLRLMDIVDWTDKTTDALMKLDLSAGVDVEIKVQ.

This sequence belongs to the universal ribosomal protein uS10 family. Part of the 30S ribosomal subunit.

In terms of biological role, involved in the binding of tRNA to the ribosomes. The chain is Small ribosomal subunit protein uS10 from Neisseria meningitidis serogroup C / serotype 2a (strain ATCC 700532 / DSM 15464 / FAM18).